Here is a 459-residue protein sequence, read N- to C-terminus: Bifunctional protein GlmU (459 aa).

A pyrophosphorylase region spans residues 1 to 229; the sequence is MSNFAIILAA…FDESLGVNDR (229 aa). UDP-N-acetyl-alpha-D-glucosamine-binding positions include 8–11, Lys-22, Gln-72, and 77–78; these read LAAG and GT. Position 102 (Asp-102) interacts with Mg(2+). UDP-N-acetyl-alpha-D-glucosamine contacts are provided by Gly-139, Glu-154, Asn-169, and Asn-227. Asn-227 lines the Mg(2+) pocket. Residues 230-250 form a linker region; the sequence is VALATAESVMRRRINHKHMVN. An N-acetyltransferase region spans residues 251–459; it reads GVSFVNPEAT…TRLPHHPKNQ (209 aa). Positions 332 and 350 each coordinate UDP-N-acetyl-alpha-D-glucosamine. The active-site Proton acceptor is His-362. Residues Tyr-365 and Asn-376 each contribute to the UDP-N-acetyl-alpha-D-glucosamine site. Residues Ala-379, 385–386, Ser-404, Ala-422, and Arg-439 each bind acetyl-CoA; that span reads NY.

This sequence in the N-terminal section; belongs to the N-acetylglucosamine-1-phosphate uridyltransferase family. In the C-terminal section; belongs to the transferase hexapeptide repeat family. Homotrimer. It depends on Mg(2+) as a cofactor.

The protein resides in the cytoplasm. It carries out the reaction alpha-D-glucosamine 1-phosphate + acetyl-CoA = N-acetyl-alpha-D-glucosamine 1-phosphate + CoA + H(+). The enzyme catalyses N-acetyl-alpha-D-glucosamine 1-phosphate + UTP + H(+) = UDP-N-acetyl-alpha-D-glucosamine + diphosphate. It functions in the pathway nucleotide-sugar biosynthesis; UDP-N-acetyl-alpha-D-glucosamine biosynthesis; N-acetyl-alpha-D-glucosamine 1-phosphate from alpha-D-glucosamine 6-phosphate (route II): step 2/2. It participates in nucleotide-sugar biosynthesis; UDP-N-acetyl-alpha-D-glucosamine biosynthesis; UDP-N-acetyl-alpha-D-glucosamine from N-acetyl-alpha-D-glucosamine 1-phosphate: step 1/1. The protein operates within bacterial outer membrane biogenesis; LPS lipid A biosynthesis. In terms of biological role, catalyzes the last two sequential reactions in the de novo biosynthetic pathway for UDP-N-acetylglucosamine (UDP-GlcNAc). The C-terminal domain catalyzes the transfer of acetyl group from acetyl coenzyme A to glucosamine-1-phosphate (GlcN-1-P) to produce N-acetylglucosamine-1-phosphate (GlcNAc-1-P), which is converted into UDP-GlcNAc by the transfer of uridine 5-monophosphate (from uridine 5-triphosphate), a reaction catalyzed by the N-terminal domain. The sequence is that of Bifunctional protein GlmU from Streptococcus pneumoniae (strain JJA).